We begin with the raw amino-acid sequence, 247 residues long: MNNFLLEDIINKKLLSNQYQDTVPNGLQIEGTEIVKKIITGVTACQALLDKALFYNADTLIVHHGYFWKNESKYIHNMQRQRLKTILSHNINLYSWHLPLDVHPKLGNNAQIAKKLNIDIQGSILPYVLWGTTKNKMTGFEFANKIERKFKKYPIHLYENAPLYISRVAWCSGRGQGFIKKACAFGIDAFLTGEISEETTHIAKELGIHFFSLGHHATEKDGVKSLGEWLQRKYDLCVDFIDIYNPA.

A divalent metal cation-binding residues include histidine 63, histidine 64, aspartate 101, histidine 215, and glutamate 219.

The protein belongs to the GTP cyclohydrolase I type 2/NIF3 family. As to quaternary structure, homohexamer.

In Buchnera aphidicola subsp. Acyrthosiphon pisum (strain APS) (Acyrthosiphon pisum symbiotic bacterium), this protein is GTP cyclohydrolase 1 type 2 homolog.